Reading from the N-terminus, the 366-residue chain is Ribosomal RNA large subunit methyltransferase M (366 aa).

S-adenosyl-L-methionine contacts are provided by residues S188, 221–224 (CPGG), D240, D260, and D277. K306 acts as the Proton acceptor in catalysis.

This sequence belongs to the class I-like SAM-binding methyltransferase superfamily. RNA methyltransferase RlmE family. RlmM subfamily. Monomer.

The protein localises to the cytoplasm. It catalyses the reaction cytidine(2498) in 23S rRNA + S-adenosyl-L-methionine = 2'-O-methylcytidine(2498) in 23S rRNA + S-adenosyl-L-homocysteine + H(+). Functionally, catalyzes the 2'-O-methylation at nucleotide C2498 in 23S rRNA. The polypeptide is Ribosomal RNA large subunit methyltransferase M (Dickeya chrysanthemi (strain Ech1591) (Dickeya zeae (strain Ech1591))).